A 297-amino-acid chain; its full sequence is 4-hydroxy-tetrahydrodipicolinate synthase (297 aa).

Thr50 contacts pyruvate. Catalysis depends on Tyr138, which acts as the Proton donor/acceptor. The Schiff-base intermediate with substrate role is filled by Lys166. Ile208 provides a ligand contact to pyruvate.

Belongs to the DapA family. In terms of assembly, homotetramer; dimer of dimers.

It localises to the cytoplasm. The catalysed reaction is L-aspartate 4-semialdehyde + pyruvate = (2S,4S)-4-hydroxy-2,3,4,5-tetrahydrodipicolinate + H2O + H(+). The protein operates within amino-acid biosynthesis; L-lysine biosynthesis via DAP pathway; (S)-tetrahydrodipicolinate from L-aspartate: step 3/4. Catalyzes the condensation of (S)-aspartate-beta-semialdehyde [(S)-ASA] and pyruvate to 4-hydroxy-tetrahydrodipicolinate (HTPA). The protein is 4-hydroxy-tetrahydrodipicolinate synthase of Gluconobacter oxydans (strain 621H) (Gluconobacter suboxydans).